Consider the following 1368-residue polypeptide: DNA-directed RNA polymerase subunit beta (1368 aa).

The protein belongs to the RNA polymerase beta chain family. The RNAP catalytic core consists of 2 alpha, 1 beta, 1 beta' and 1 omega subunit. When a sigma factor is associated with the core the holoenzyme is formed, which can initiate transcription.

The enzyme catalyses RNA(n) + a ribonucleoside 5'-triphosphate = RNA(n+1) + diphosphate. In terms of biological role, DNA-dependent RNA polymerase catalyzes the transcription of DNA into RNA using the four ribonucleoside triphosphates as substrates. This chain is DNA-directed RNA polymerase subunit beta, found in Paraburkholderia phymatum (strain DSM 17167 / CIP 108236 / LMG 21445 / STM815) (Burkholderia phymatum).